The primary structure comprises 192 residues: MKKVKKKRSEARRHRDSTSQHASSNSTSQQPSPESTPQQPSPESTPQQPSPESTPQHSSLETTSRQPAFQALPAPEIRRSSCCLLSPDANVKAAPQSRKAGPLIRAGPHSCSCATCPCSSACWRRLGLCHSRIFDVLLPRDWQMAPGRGLPNLLTFYRKSSRKPSSHRNACPPSPRNCGCGSGGSRSCLLHH.

A compositionally biased stretch (basic residues) spans 1-15 (MKKVKKKRSEARRHR). Disordered regions lie at residues 1–65 (MKKV…TTSR) and 161–184 (SRKP…GSGG). The span at 19–59 (SQHASSNSTSQQPSPESTPQQPSPESTPQQPSPESTPQHSS) shows a compositional bias: low complexity.

The protein localises to the cell projection. It is found in the cilium. It localises to the flagellum. The polypeptide is Spermatogenesis-associated protein 3 (SPATA3) (Homo sapiens (Human)).